The primary structure comprises 394 residues: MSKEKFQRIRTHINVGTIGHVDHGKTTLTAAITTVLSKKYGGCARAFDQIDNAPEEKARGITINTSHVEYDTEFRHYAHVDCPGHADYVKNMITGAAQMDGAILVVAATDGPMPQTREHILLARQVGVPHIVVFLNKCDMVDDLELLELVEMEVRELLSQYDFPGDSAPIIQGSALKALEGDEKWSSKVLELSSILDNYIPEPKRSIDKPFLLPIEDVFSISGRGTVVTGRVESGIIKVGEEVEIVGIKDTVKTTCTGIEMFRKLLDEGRAGENVGVLLRGTKRDEVERGQVLSKPGCIKPHSNFESEVYILNKDEGGRHTPFFKGYRPQFYFRTTDVTGTIELPKEVEMVMPGDNIKMVVHLISPIAMDDGLRFAIREGGRTVGAGVVSRVIS.

The tr-type G domain maps to 10 to 204 (RTHINVGTIG…ILDNYIPEPK (195 aa)). The tract at residues 19–26 (GHVDHGKT) is G1. Position 19 to 26 (19 to 26 (GHVDHGKT)) interacts with GTP. Thr-26 provides a ligand contact to Mg(2+). The interval 60 to 64 (GITIN) is G2. Residues 81 to 84 (DCPG) are G3. Residues 81–85 (DCPGH) and 136–139 (NKCD) contribute to the GTP site. Residues 136–139 (NKCD) form a G4 region. Residues 174 to 176 (SAL) form a G5 region.

Belongs to the TRAFAC class translation factor GTPase superfamily. Classic translation factor GTPase family. EF-Tu/EF-1A subfamily. In terms of assembly, monomer.

It is found in the cytoplasm. The catalysed reaction is GTP + H2O = GDP + phosphate + H(+). Functionally, GTP hydrolase that promotes the GTP-dependent binding of aminoacyl-tRNA to the A-site of ribosomes during protein biosynthesis. The chain is Elongation factor Tu from Blochmanniella floridana.